A 426-amino-acid polypeptide reads, in one-letter code: Adenylosuccinate synthetase (426 aa).

GTP is bound by residues 13-19 (GDEGKGK) and 41-43 (GHT). Residue Asp-14 is the Proton acceptor of the active site. Positions 14 and 41 each coordinate Mg(2+). Residues 14-17 (DEGK), 39-42 (NAGH), Thr-129, Arg-143, Gln-224, Thr-239, and Arg-303 each bind IMP. His-42 serves as the catalytic Proton donor. Residue 299–305 (TTTGRPR) coordinates substrate. GTP-binding positions include Arg-305, 331 to 333 (KLD), and 414 to 416 (GTG).

The protein belongs to the adenylosuccinate synthetase family. Homodimer. Mg(2+) serves as cofactor.

It localises to the cytoplasm. The catalysed reaction is IMP + L-aspartate + GTP = N(6)-(1,2-dicarboxyethyl)-AMP + GDP + phosphate + 2 H(+). The protein operates within purine metabolism; AMP biosynthesis via de novo pathway; AMP from IMP: step 1/2. Its function is as follows. Plays an important role in the de novo pathway of purine nucleotide biosynthesis. Catalyzes the first committed step in the biosynthesis of AMP from IMP. In Caldicellulosiruptor bescii (strain ATCC BAA-1888 / DSM 6725 / KCTC 15123 / Z-1320) (Anaerocellum thermophilum), this protein is Adenylosuccinate synthetase.